We begin with the raw amino-acid sequence, 41 residues long: Photosystem II reaction center protein L (41 aa).

The chain crosses the membrane as a helical span at residues 20–40 (SLYLGLLLVFVVGLLFSSYFL).

It belongs to the PsbL family. In terms of assembly, PSII is composed of 1 copy each of membrane proteins PsbA, PsbB, PsbC, PsbD, PsbE, PsbF, PsbH, PsbI, PsbJ, PsbK, PsbL, PsbM, PsbT, PsbX, PsbY, PsbZ, Psb30/Ycf12, peripheral proteins PsbO, CyanoQ (PsbQ), PsbU, PsbV and a large number of cofactors. It forms dimeric complexes.

It is found in the cellular thylakoid membrane. Functionally, one of the components of the core complex of photosystem II (PSII). PSII is a light-driven water:plastoquinone oxidoreductase that uses light energy to abstract electrons from H(2)O, generating O(2) and a proton gradient subsequently used for ATP formation. It consists of a core antenna complex that captures photons, and an electron transfer chain that converts photonic excitation into a charge separation. This subunit is found at the monomer-monomer interface and is required for correct PSII assembly and/or dimerization. In Synechococcus sp. (strain JA-3-3Ab) (Cyanobacteria bacterium Yellowstone A-Prime), this protein is Photosystem II reaction center protein L.